Reading from the N-terminus, the 353-residue chain is Phosphate acyltransferase (353 aa).

This sequence belongs to the PlsX family. As to quaternary structure, homodimer. Probably interacts with PlsY.

The protein localises to the cytoplasm. The enzyme catalyses a fatty acyl-[ACP] + phosphate = an acyl phosphate + holo-[ACP]. The protein operates within lipid metabolism; phospholipid metabolism. Catalyzes the reversible formation of acyl-phosphate (acyl-PO(4)) from acyl-[acyl-carrier-protein] (acyl-ACP). This enzyme utilizes acyl-ACP as fatty acyl donor, but not acyl-CoA. The sequence is that of Phosphate acyltransferase from Nitrosospira multiformis (strain ATCC 25196 / NCIMB 11849 / C 71).